The sequence spans 553 residues: Putative transport protein CKO_00031 (553 aa).

The next 5 membrane-spanning stretches (helical) occupy residues 4–24 (IALTVSVLALVAVVGLWIGNI), 28–48 (GVGFGIGGVLFGGIIVGHFVD), 65–85 (FGLILFVYTIGIQVGPGFFAS), 95–115 (LFAILIVIIGGLVTAILHKIF), and 158–178 (MSYAMAYPFGICGILLTMWLM). RCK C-terminal domains lie at 192–276 (QHED…VIGQ) and 279–361 (DTSL…VVGN). A run of 6 helical transmembrane segments spans residues 371–391 (MLPVFIGIGLGVLLGSIPLFV), 393–413 (GFPVALKLGLAGGPLIMALIL), 437–457 (LGIVLFLAVVGLKSGGDFIDT), 464–484 (LSWIGYGIFITAIPLITVGLL), 493–513 (YLTLCGMLAGSMTDPPALAFA), and 533–553 (LVMFLRIITPQLLAVLFWGLG).

Belongs to the AAE transporter (TC 2.A.81) family. YidE subfamily.

The protein resides in the cell membrane. The polypeptide is Putative transport protein CKO_00031 (Citrobacter koseri (strain ATCC BAA-895 / CDC 4225-83 / SGSC4696)).